An 89-amino-acid polypeptide reads, in one-letter code: Cell division topological specificity factor (89 aa).

It belongs to the MinE family.

Functionally, prevents the cell division inhibition by proteins MinC and MinD at internal division sites while permitting inhibition at polar sites. This ensures cell division at the proper site by restricting the formation of a division septum at the midpoint of the long axis of the cell. This Desulforudis audaxviator (strain MP104C) protein is Cell division topological specificity factor.